Here is a 594-residue protein sequence, read N- to C-terminus: METHLYSDLAFEARFADDEQLPLHLVLDQEVLSNEEAETLRYVYYRNVDSAGRSTGRAPGGDEDDAPASDDAEDAVGGDRAFDRERRTWQRACFRVLPRPLELLDYLRQSGLTVTLEKEQRVRMFYAVFTTLGLRCPDNRLSGAQTLHLRLVWPDGSYRDWEFLARDLLREEMEANKRDRQHQLATTTNHRRRGGLRNNLDNGSDRRLPEAAVASLETAVSTPFFEIPNGAGTSSANGDGRFSNLEQRVARLLRGDEEFIYHAGPLEPPSKIRGHELVQLRLDVNPDLMYATDPHDRDEVARTDEWKGAGVSRLREVWDVQHRVRLRVLWYVNSFWRSRELSYDDHEVELYRALDAYRARIAVEYVLIRAVRDEIYAVLRRDGGALPQRFACHVSRNMSWRVVWELCRHALALWMDWADVRSCIIKALTPRLSRGAAAAAQRARRQRERSAPKPQELLFGPRNESGPPAEQTWYADVVRCVRAQVDLGVEVRAARCPRTGLWIVRDRRGRLRRWLSQPEVCVLYVTPDLDFYWVLPGGFAVSSRVTLHGLAQRALRDRFQNFEAVLARGMHVEAGRQEPETPRVSGRRLPFDDL.

Disordered regions lie at residues 52–77, 176–205, 443–468, and 575–594; these read GRSTGRAPGGDEDDAPASDDAEDAVG, NKRDRQHQLATTTNHRRRGGLRNNLDNGSD, ARRQRERSAPKPQELLFGPRNESGPP, and GRQEPETPRVSGRRLPFDDL. Acidic residues predominate over residues 61-76; it reads GDEDDAPASDDAEDAV.

This sequence belongs to the herpesviridae CVC1 protein family. Interacts (via C-terminus) with capsid vertex component 2/CVC2.

It is found in the virion. The protein resides in the host nucleus. Functionally, capsid vertex-specific component that plays a role during viral DNA encapsidation, assuring correct genome cleavage and presumably stabilizing capsids that contain full-length viral genomes. The protein is Capsid vertex component 1 of Homo sapiens (Human).